The following is a 358-amino-acid chain: Thiol protease aleurain-like (358 aa).

A signal peptide spans Met-1–Ser-21. A propeptide spans Lys-22–Thr-140 (activation peptide). An N-linked (GlcNAc...) asparagine glycan is attached at Asn-125. 2 cysteine pairs are disulfide-bonded: Cys-162–Cys-205 and Cys-196–Cys-238. Cys-165 is an active-site residue. Asn-254 carries an N-linked (GlcNAc...) asparagine glycan. An intrachain disulfide couples Cys-296 to Cys-346. Active-site residues include His-305 and Asn-325.

This sequence belongs to the peptidase C1 family.

Its subcellular location is the vacuole. The enzyme catalyses Hydrolysis of proteins, acting as an aminopeptidase (notably, cleaving Arg-|-Xaa bonds) as well as an endopeptidase.. Its function is as follows. May play a role in proteolysis leading to mobilization of nitrogen during senescence and starvation. This Arabidopsis thaliana (Mouse-ear cress) protein is Thiol protease aleurain-like.